Here is a 264-residue protein sequence, read N- to C-terminus: Thymidylate synthase (264 aa).

Arg-21 is a binding site for dUMP. His-51 contributes to the (6R)-5,10-methylene-5,6,7,8-tetrahydrofolate binding site. Arg-126–Arg-127 provides a ligand contact to dUMP. Residue Cys-146 is the Nucleophile of the active site. DUMP contacts are provided by residues Arg-166–Asp-169, Asn-177, and His-207–Tyr-209. Asp-169 provides a ligand contact to (6R)-5,10-methylene-5,6,7,8-tetrahydrofolate. Position 263 (Ala-263) interacts with (6R)-5,10-methylene-5,6,7,8-tetrahydrofolate.

This sequence belongs to the thymidylate synthase family. Bacterial-type ThyA subfamily. Homodimer.

The protein resides in the cytoplasm. It catalyses the reaction dUMP + (6R)-5,10-methylene-5,6,7,8-tetrahydrofolate = 7,8-dihydrofolate + dTMP. It functions in the pathway pyrimidine metabolism; dTTP biosynthesis. Functionally, catalyzes the reductive methylation of 2'-deoxyuridine-5'-monophosphate (dUMP) to 2'-deoxythymidine-5'-monophosphate (dTMP) while utilizing 5,10-methylenetetrahydrofolate (mTHF) as the methyl donor and reductant in the reaction, yielding dihydrofolate (DHF) as a by-product. This enzymatic reaction provides an intracellular de novo source of dTMP, an essential precursor for DNA biosynthesis. The sequence is that of Thymidylate synthase from Salmonella typhimurium (strain LT2 / SGSC1412 / ATCC 700720).